A 60-amino-acid chain; its full sequence is Cytotoxin 5 (60 aa).

4 disulfide bridges follow: cysteine 3-cysteine 21, cysteine 14-cysteine 38, cysteine 42-cysteine 53, and cysteine 54-cysteine 59.

Belongs to the three-finger toxin family. Short-chain subfamily. Type IA cytotoxin sub-subfamily. In terms of assembly, monomer in solution; Homodimer and oligomer in the presence of negatively charged lipids forming a pore with a size ranging between 20 and 30 Angstroms. As to expression, expressed by the venom gland.

The protein resides in the secreted. The protein localises to the target cell membrane. Its function is as follows. Shows cytolytic activity on many different cells by forming pore in lipid membranes. In vivo, increases heart rate or kills the animal by cardiac arrest. In addition, it binds to heparin with high affinity, interacts with Kv channel-interacting protein 1 (KCNIP1) in a calcium-independent manner, and binds to integrin alpha-V/beta-3 (ITGAV/ITGB3) with moderate affinity. This Naja annulifera (Banded Egyptian cobra) protein is Cytotoxin 5.